The chain runs to 407 residues: Putative membrane protein 047R (407 aa).

Positions 265–337 are disordered; the sequence is INCVFKPDPP…PPKPTPPPPI (73 aa). Positions 271–337 are enriched in pro residues; the sequence is PDPPPQPKPQ…PPKPTPPPPI (67 aa). The next 2 helical transmembrane spans lie at 355–372 and 385–403; these read NWIM…VIYP and NAAI…QSYV.

This sequence belongs to the IIV-6 337L family.

The protein localises to the virion membrane. The sequence is that of Putative membrane protein 047R from Aedes vexans (Inland floodwater mosquito).